A 410-amino-acid polypeptide reads, in one-letter code: Arginine deiminase (410 aa).

The Amidino-cysteine intermediate role is filled by Cys-399.

It belongs to the arginine deiminase family.

It localises to the cytoplasm. It catalyses the reaction L-arginine + H2O = L-citrulline + NH4(+). The protein operates within amino-acid degradation; L-arginine degradation via ADI pathway; carbamoyl phosphate from L-arginine: step 1/2. The polypeptide is Arginine deiminase (Listeria monocytogenes serovar 1/2a (strain ATCC BAA-679 / EGD-e)).